The following is a 616-amino-acid chain: Protein translocase subunit SecD (616 aa).

6 helical membrane-spanning segments follow: residues 11-31 (LMVIFIVAIGILYSLPNIYGE), 453-473 (QGINASLWGLVAVIAFMLFYY), 475-495 (MFGVIASFALVINIVLLVGLM), 497-517 (ILPGATLSMPGIAGIVLTLGM), 547-569 (YNGAFTSIFDANLTTILTAIILY), and 585-605 (LGVAISMFTAITGTRALVNAL).

The protein belongs to the SecD/SecF family. SecD subfamily. In terms of assembly, forms a complex with SecF. Part of the essential Sec protein translocation apparatus which comprises SecA, SecYEG and auxiliary proteins SecDF-YajC and YidC.

It localises to the cell inner membrane. Its function is as follows. Part of the Sec protein translocase complex. Interacts with the SecYEG preprotein conducting channel. SecDF uses the proton motive force (PMF) to complete protein translocation after the ATP-dependent function of SecA. The polypeptide is Protein translocase subunit SecD (Haemophilus influenzae (strain ATCC 51907 / DSM 11121 / KW20 / Rd)).